The primary structure comprises 202 residues: Imidazoleglycerol-phosphate dehydratase (202 aa).

This sequence belongs to the imidazoleglycerol-phosphate dehydratase family.

The protein localises to the cytoplasm. It carries out the reaction D-erythro-1-(imidazol-4-yl)glycerol 3-phosphate = 3-(imidazol-4-yl)-2-oxopropyl phosphate + H2O. It functions in the pathway amino-acid biosynthesis; L-histidine biosynthesis; L-histidine from 5-phospho-alpha-D-ribose 1-diphosphate: step 6/9. The sequence is that of Imidazoleglycerol-phosphate dehydratase from Corynebacterium diphtheriae (strain ATCC 700971 / NCTC 13129 / Biotype gravis).